The chain runs to 998 residues: MNRRRKFLLASVLALQNSSFIYPSCQKCFSRIILVSKRSNCPKCGSTGESGNANYRYKLSLKVAESNKLFVITVFGSCLDTFFGLTATGLHRYIQDPNKIPETLDNDTTQNLLTKAVETCFVGQSFIFGVTNFENQPGQGSDASNFLQQCSDHKRKAKALVACQIVLPDPGIAGFTVIDYFHQLLQTFNFRKLQCDSQAPNNHLLALDHSNSDLSSIYTSDSTSDFFKSCSKDTFSKFWQPSLEFTCIVSQLTDNDDFSASEQSKAFGTLQQNRKSISIAEATGSSSCHDPIQDSWSLVSYMDKKSTAEKLGKELGLQAKELSAVHSSHHEIGVNDSNLFSLEMREPLESSNTKSFHSAVEIKNRSQHELPCFQHHGIDTPTSLQKRSACCPPSLLRLEETASSSQDGDPQIWDDLPFSESLNKFLAVLESEIAVTQADVSSRKHHVDNDIDKFHADHSRLSVTPQRTTGALHTPPIALRSSQVIVKANCSKDDFLFNCKGNLSPSVEKESQPDNKVEAVSVNHNGRDMSEYFLPNPYLSALSSSSKDLETIVTLKKTIRISPHRESDHSSLNNKYLNGCGEISVSEMNEKLTTLCYRKYNDVSDLCKLENKQYCRWSKNQDDSFTICRKLTYPLETLCNSPNRSTNTLKEMPWGHINNNVTQSYSIGYEGSYDASADLFDDIAKEMDIATEITKKSQDILLKWGTSLAESHPSESDFSLRSLSEDFIQPSQKLSLQSLSDSRHSRTCSPTPHFQSDSEYNFENSQDFVPCSQSTPISGFHQTRIHGINRAFKKPVFYSDLDGNYEKIRIFPENDKQQASPSCPKNIKTPSQKIRSPIVSGVSQPDVFNHYPFAECHETDSDEWVPPTTQKIFPSDMLGFQGIGLGKCLAAYHFPDQQELPRKKLKHIRQGTNKGLIKKKLKNMLAAVVTKKKTHKYNCKSSGWISKCPDIQVLAAPQLHPILGPDSCSEVKCCLPFSEKGPPSVCETRSAWSPELFS.

The disordered stretch occupies residues 815–834 (DKQQASPSCPKNIKTPSQKI). The span at 817–834 (QQASPSCPKNIKTPSQKI) shows a compositional bias: polar residues.

In terms of tissue distribution, highly expressed in colorectal and lung cancer tissues.

The protein localises to the cytoplasm. It is found in the nucleus. In terms of biological role, may be an anti-apoptotic protein involved in DNA repair or cell survival. The protein is DNA damage-induced apoptosis suppressor protein (DDIAS) of Homo sapiens (Human).